The sequence spans 293 residues: MHITLRQLEVFAEVLKSGSTTQASVMLALSQSAVSAALTDLEGQLGVQLFDRVGKRLVVNEHGRLLYPRALALLEQAVEIEQLFREDNGAIRIYASSTIGNYILPAVIARYRHDYPQLPIELSVGNSQDVMQAVLDFRVDIGFIEGPCHSTEIISEPWLEDELVVFAAPTSPLARGPVTLEQLAAAPWILRERGSGTREIVDYLLLSHLPKFEMAMELGNSEAIKHAVRHGLGISCLSRRVIEDQLQAGTLSEVAVPLPRLMRTLWRIHHRQKHLSNALRRFLDYCDPANVPR.

The 60-residue stretch at 1-60 (MHITLRQLEVFAEVLKSGSTTQASVMLALSQSAVSAALTDLEGQLGVQLFDRVGKRLVVN) folds into the HTH lysR-type domain. Positions 20–39 (TTQASVMLALSQSAVSAALT) form a DNA-binding region, H-T-H motif.

Belongs to the LysR transcriptional regulatory family.

This is an uncharacterized protein from Escherichia coli O157:H7.